The chain runs to 252 residues: Ubiquinone/menaquinone biosynthesis C-methyltransferase UbiE (252 aa).

S-adenosyl-L-methionine contacts are provided by residues Thr71, Asp100, 124–125, and Ser141; that span reads DA.

The protein belongs to the class I-like SAM-binding methyltransferase superfamily. MenG/UbiE family.

It catalyses the reaction a 2-demethylmenaquinol + S-adenosyl-L-methionine = a menaquinol + S-adenosyl-L-homocysteine + H(+). The catalysed reaction is a 2-methoxy-6-(all-trans-polyprenyl)benzene-1,4-diol + S-adenosyl-L-methionine = a 5-methoxy-2-methyl-3-(all-trans-polyprenyl)benzene-1,4-diol + S-adenosyl-L-homocysteine + H(+). It functions in the pathway quinol/quinone metabolism; menaquinone biosynthesis; menaquinol from 1,4-dihydroxy-2-naphthoate: step 2/2. It participates in cofactor biosynthesis; ubiquinone biosynthesis. In terms of biological role, methyltransferase required for the conversion of demethylmenaquinol (DMKH2) to menaquinol (MKH2) and the conversion of 2-polyprenyl-6-methoxy-1,4-benzoquinol (DDMQH2) to 2-polyprenyl-3-methyl-6-methoxy-1,4-benzoquinol (DMQH2). In Caulobacter sp. (strain K31), this protein is Ubiquinone/menaquinone biosynthesis C-methyltransferase UbiE.